The following is a 428-amino-acid chain: Serine--tRNA ligase (428 aa).

235–237 (TAE) provides a ligand contact to L-serine. 266-268 (RYE) contributes to the ATP binding site. E289 is an L-serine binding site. 353–356 (EVSS) contacts ATP. S389 is a binding site for L-serine.

This sequence belongs to the class-II aminoacyl-tRNA synthetase family. Type-1 seryl-tRNA synthetase subfamily. As to quaternary structure, homodimer. The tRNA molecule binds across the dimer.

It is found in the cytoplasm. It catalyses the reaction tRNA(Ser) + L-serine + ATP = L-seryl-tRNA(Ser) + AMP + diphosphate + H(+). It carries out the reaction tRNA(Sec) + L-serine + ATP = L-seryl-tRNA(Sec) + AMP + diphosphate + H(+). Its pathway is aminoacyl-tRNA biosynthesis; selenocysteinyl-tRNA(Sec) biosynthesis; L-seryl-tRNA(Sec) from L-serine and tRNA(Sec): step 1/1. Its function is as follows. Catalyzes the attachment of serine to tRNA(Ser). Is also able to aminoacylate tRNA(Sec) with serine, to form the misacylated tRNA L-seryl-tRNA(Sec), which will be further converted into selenocysteinyl-tRNA(Sec). The polypeptide is Serine--tRNA ligase (Blochmanniella pennsylvanica (strain BPEN)).